Consider the following 372-residue polypeptide: Rab9 effector protein with kelch motifs (372 aa).

5 Kelch repeats span residues lysine 49–serine 95, arginine 100–alanine 146, glutamine 151–alanine 200, lysine 204–alanine 250, and histidine 254–tryptophan 303. Serine 133 carries the post-translational modification Phosphoserine. The tract at residues serine 314 to histidine 340 is disordered. Residues histidine 321–histidine 340 are compositionally biased toward basic and acidic residues.

Interacts with PIKFYVE; the interaction recruits RABEPK to the endosomal membrane. Interacts with RAB9 in its GTP-bound conformation. In terms of processing, phosphorylated on Ser residues by PIKFYVE.

The protein localises to the cytoplasm. It is found in the endosome membrane. Functionally, rab9 effector required for endosome to trans-Golgi network (TGN) transport. The polypeptide is Rab9 effector protein with kelch motifs (Homo sapiens (Human)).